The following is a 65-amino-acid chain: Defensin-B2 (65 aa).

The signal sequence occupies residues 1 to 23 (MEARVLLLCAVLFLLVHTPPAAG). 3 cysteine pairs are disulfide-bonded: Cys-29-Cys-56, Cys-36-Cys-50, and Cys-40-Cys-57.

It belongs to the beta-defensin family. In terms of tissue distribution, lowly expressed in spleen, and lung.

Its subcellular location is the secreted. Its function is as follows. Has antimicrobial activity. The sequence is that of Defensin-B2 from Ornithorhynchus anatinus (Duckbill platypus).